Consider the following 249-residue polypeptide: Ditrans,polycis-undecaprenyl-diphosphate synthase ((2E,6E)-farnesyl-diphosphate specific) (249 aa).

D26 is a catalytic residue. D26 provides a ligand contact to Mg(2+). Residues 27–30 (GNGR), W31, R39, H43, and 71–73 (SRE) contribute to the substrate site. N74 serves as the catalytic Proton acceptor. Substrate is bound by residues W75, R77, R194, and 200-202 (RIS). E213 is a binding site for Mg(2+).

The protein belongs to the UPP synthase family. Homodimer. Mg(2+) serves as cofactor.

The catalysed reaction is 8 isopentenyl diphosphate + (2E,6E)-farnesyl diphosphate = di-trans,octa-cis-undecaprenyl diphosphate + 8 diphosphate. Catalyzes the sequential condensation of isopentenyl diphosphate (IPP) with (2E,6E)-farnesyl diphosphate (E,E-FPP) to yield (2Z,6Z,10Z,14Z,18Z,22Z,26Z,30Z,34E,38E)-undecaprenyl diphosphate (di-trans,octa-cis-UPP). UPP is the precursor of glycosyl carrier lipid in the biosynthesis of bacterial cell wall polysaccharide components such as peptidoglycan and lipopolysaccharide. The protein is Ditrans,polycis-undecaprenyl-diphosphate synthase ((2E,6E)-farnesyl-diphosphate specific) of Buchnera aphidicola subsp. Schizaphis graminum (strain Sg).